The following is a 93-amino-acid chain: MTQSSNVKTFDALFAELSERARTRPAGSGTVAALDGGVHGIGKKILEEAGEVWLAAEHESDDALAEEISQLLYWTQVLMLARGLSLDDVYGKL.

This sequence belongs to the PRA-PH family.

The protein resides in the cytoplasm. It catalyses the reaction 1-(5-phospho-beta-D-ribosyl)-ATP + H2O = 1-(5-phospho-beta-D-ribosyl)-5'-AMP + diphosphate + H(+). It functions in the pathway amino-acid biosynthesis; L-histidine biosynthesis; L-histidine from 5-phospho-alpha-D-ribose 1-diphosphate: step 2/9. The sequence is that of Phosphoribosyl-ATP pyrophosphatase from Mycolicibacterium gilvum (strain PYR-GCK) (Mycobacterium gilvum (strain PYR-GCK)).